The following is a 707-amino-acid chain: Alpha-hemolysin translocation ATP-binding protein HlyB (707 aa).

One can recognise a Peptidase C39 domain in the interval 3 to 125 (SCHKIDYGLY…ALYQGHIILI (123 aa)). His83 is an active-site residue. The ABC transmembrane type-1 domain occupies 154-436 (FIETLVVSVF…LAQIWQDFQQ (283 aa)). 5 helical membrane passes run 158 to 178 (LVVS…FQVV), 191 to 211 (LNVI…LSGL), 269 to 289 (ALTS…MWYY), 295 to 315 (LVIL…SPIL), and 388 to 408 (VMII…LSIG). Residues 468 to 703 (ITFRNIRFRY…PESLYSYLYQ (236 aa)) enclose the ABC transporter domain. Position 502–509 (502–509 (GRSGSGKS)) interacts with ATP.

The protein belongs to the ABC transporter superfamily. Protein-1 exporter (TC 3.A.1.109) family. In terms of assembly, homodimer.

The protein localises to the cell inner membrane. Part of the ABC transporter complex HlyBD involved in hemolysin export. Transmembrane domains (TMD) form a pore in the inner membrane and the ATP-binding domain (NBD) is responsible for energy generation. This is Alpha-hemolysin translocation ATP-binding protein HlyB (hlyB) from Escherichia coli.